The sequence spans 168 residues: Photosystem I assembly protein Ycf3 (168 aa).

TPR repeat units lie at residues A35–P68, S72–L105, and G120–N153.

It belongs to the Ycf3 family.

The protein localises to the plastid. It is found in the chloroplast thylakoid membrane. In terms of biological role, essential for the assembly of the photosystem I (PSI) complex. May act as a chaperone-like factor to guide the assembly of the PSI subunits. This chain is Photosystem I assembly protein Ycf3, found in Solanum tuberosum (Potato).